The chain runs to 125 residues: Large ribosomal subunit protein eL8 (125 aa).

The protein belongs to the eukaryotic ribosomal protein eL8 family. In terms of assembly, part of the 50S ribosomal subunit. Probably part of the RNase P complex.

The protein localises to the cytoplasm. Functionally, multifunctional RNA-binding protein that recognizes the K-turn motif in ribosomal RNA, the RNA component of RNase P, box H/ACA, box C/D and box C'/D' sRNAs. In Metallosphaera sedula (strain ATCC 51363 / DSM 5348 / JCM 9185 / NBRC 15509 / TH2), this protein is Large ribosomal subunit protein eL8.